A 257-amino-acid chain; its full sequence is NAD-capped RNA hydrolase NudC (257 aa).

Residues Lys-25 and Arg-69 each coordinate substrate. 2 residues coordinate Zn(2+): Cys-98 and Cys-101. Glu-111 contacts substrate. Zn(2+) contacts are provided by Cys-116 and Cys-119. Substrate is bound at residue Tyr-124. The region spanning 125-248 (PQIAPCIIVA…TVARRLIEDT (124 aa)) is the Nudix hydrolase domain. Positions 158, 174, and 178 each coordinate a divalent metal cation. Positions 159 to 180 (GFVEVGETLEQAVAREVMEESG) match the Nudix box motif. 192 to 199 (QPWPFPQS) serves as a coordination point for substrate. Glu-219 contributes to the a divalent metal cation binding site. Ala-241 contacts substrate.

Belongs to the Nudix hydrolase family. NudC subfamily. In terms of assembly, homodimer. Requires Mg(2+) as cofactor. Mn(2+) is required as a cofactor. It depends on Zn(2+) as a cofactor.

The enzyme catalyses a 5'-end NAD(+)-phospho-ribonucleoside in mRNA + H2O = a 5'-end phospho-adenosine-phospho-ribonucleoside in mRNA + beta-nicotinamide D-ribonucleotide + 2 H(+). It catalyses the reaction NAD(+) + H2O = beta-nicotinamide D-ribonucleotide + AMP + 2 H(+). It carries out the reaction NADH + H2O = reduced beta-nicotinamide D-ribonucleotide + AMP + 2 H(+). MRNA decapping enzyme that specifically removes the nicotinamide adenine dinucleotide (NAD) cap from a subset of mRNAs by hydrolyzing the diphosphate linkage to produce nicotinamide mononucleotide (NMN) and 5' monophosphate mRNA. The NAD-cap is present at the 5'-end of some mRNAs and stabilizes RNA against 5'-processing. Has preference for mRNAs with a 5'-end purine. Catalyzes the hydrolysis of a broad range of dinucleotide pyrophosphates. The chain is NAD-capped RNA hydrolase NudC from Shigella flexneri serotype 5b (strain 8401).